Here is a 227-residue protein sequence, read N- to C-terminus: Ras-related protein Rab-3C (227 aa).

GTP-binding residues include S39, G42, K43, T44, S45, T56, S57, S61, and T62. Residue T44 coordinates Mg(2+). The Switch 1 signature appears at 53–66 (DSFTSAFVSTVGID). Mg(2+) contacts are provided by T62 and D85. T86 is modified (phosphothreonine). The Switch 2 signature appears at 86–104 (TAGQERYRTITTAYYRGAM). GTP is bound by residues G88, N143, K144, D146, A174, and K175. Residues S196 and S198 each carry the phosphoserine modification. Phosphothreonine is present on T206. Residues C225 and C227 are each lipidated (S-geranylgeranyl cysteine). C227 is modified (cysteine methyl ester).

It belongs to the small GTPase superfamily. Rab family. As to quaternary structure, interacts with RIMS1, RIMS2, RPH3A and RPH3AL. The GTP-bound form interacts with REP15. Interacts with GDI2, CHM and CHML; phosphorylation at Thr-86 disrupts these interactions. Interacts with MADD (via uDENN domain); the GTP-bound form is preferred for interaction. It depends on Mg(2+) as a cofactor. Phosphorylation of Thr-86 in the switch II region by LRRK2 prevents the association of RAB regulatory proteins, including CHM, CHML and RAB GDP dissociation inhibitor GDI2.

The protein localises to the cell membrane. It catalyses the reaction GTP + H2O = GDP + phosphate + H(+). Regulated by guanine nucleotide exchange factors (GEFs) which promote the exchange of bound GDP for free GTP. Regulated by GTPase activating proteins (GAPs) which increase the GTP hydrolysis activity. Inhibited by GDP dissociation inhibitors (GDIs) which prevent Rab-GDP dissociation. In terms of biological role, the small GTPases Rab are key regulators of intracellular membrane trafficking, from the formation of transport vesicles to their fusion with membranes. Rabs cycle between an inactive GDP-bound form and an active GTP-bound form that is able to recruit to membranes different sets of downstream effectors directly responsible for vesicle formation, movement, tethering and fusion. In Bos taurus (Bovine), this protein is Ras-related protein Rab-3C (RAB3C).